A 445-amino-acid polypeptide reads, in one-letter code: Phosphoglucosamine mutase (445 aa).

Residue S102 is the Phosphoserine intermediate of the active site. Mg(2+) is bound by residues S102, D241, D243, and D245. S102 carries the phosphoserine modification.

The protein belongs to the phosphohexose mutase family. It depends on Mg(2+) as a cofactor. In terms of processing, activated by phosphorylation.

It carries out the reaction alpha-D-glucosamine 1-phosphate = D-glucosamine 6-phosphate. In terms of biological role, catalyzes the conversion of glucosamine-6-phosphate to glucosamine-1-phosphate. In Escherichia coli O7:K1 (strain IAI39 / ExPEC), this protein is Phosphoglucosamine mutase.